The following is a 276-amino-acid chain: 2-dehydro-3-deoxyphosphooctonate aldolase (276 aa).

This sequence belongs to the KdsA family.

Its subcellular location is the cytoplasm. The catalysed reaction is D-arabinose 5-phosphate + phosphoenolpyruvate + H2O = 3-deoxy-alpha-D-manno-2-octulosonate-8-phosphate + phosphate. It participates in carbohydrate biosynthesis; 3-deoxy-D-manno-octulosonate biosynthesis; 3-deoxy-D-manno-octulosonate from D-ribulose 5-phosphate: step 2/3. The protein operates within bacterial outer membrane biogenesis; lipopolysaccharide biosynthesis. The protein is 2-dehydro-3-deoxyphosphooctonate aldolase of Helicobacter pylori (strain Shi470).